A 170-amino-acid chain; its full sequence is NADH-ubiquinone oxidoreductase chain 2 (170 aa).

Helical transmembrane passes span 24 to 44 (LLWMTYFLLYSLLSISIIMMF), 67 to 87 (FLIFLNLLSLGGLPPFLGFLP), 101 to 121 (LFILTISVCLTLITLYFYLRL), and 150 to 170 (LILNFISIGGLLMILMFYMIL).

It belongs to the complex I subunit 2 family.

It is found in the mitochondrion inner membrane. It carries out the reaction a ubiquinone + NADH + 5 H(+)(in) = a ubiquinol + NAD(+) + 4 H(+)(out). Functionally, core subunit of the mitochondrial membrane respiratory chain NADH dehydrogenase (Complex I) that is believed to belong to the minimal assembly required for catalysis. Complex I functions in the transfer of electrons from NADH to the respiratory chain. The immediate electron acceptor for the enzyme is believed to be ubiquinone. In Anopheles albimanus (New world malaria mosquito), this protein is NADH-ubiquinone oxidoreductase chain 2 (ND2).